The chain runs to 514 residues: 2,3-bisphosphoglycerate-independent phosphoglycerate mutase (514 aa).

Residues D13 and S63 each coordinate Mn(2+). The Phosphoserine intermediate role is filled by S63. Substrate is bound by residues H124, 154 to 155 (RD), R186, R192, 258 to 261 (RADR), and K332. Mn(2+) is bound by residues D399, H403, D440, H441, and H459.

This sequence belongs to the BPG-independent phosphoglycerate mutase family. As to quaternary structure, monomer. It depends on Mn(2+) as a cofactor.

It catalyses the reaction (2R)-2-phosphoglycerate = (2R)-3-phosphoglycerate. It participates in carbohydrate degradation; glycolysis; pyruvate from D-glyceraldehyde 3-phosphate: step 3/5. Functionally, catalyzes the interconversion of 2-phosphoglycerate and 3-phosphoglycerate. The protein is 2,3-bisphosphoglycerate-independent phosphoglycerate mutase of Legionella pneumophila subsp. pneumophila (strain Philadelphia 1 / ATCC 33152 / DSM 7513).